The primary structure comprises 81 residues: GAMMA-ctenitoxin-Pn1a (81 aa).

Positions 1–16 (MKVAIVFLSLLVLAFA) are cleaved as a signal peptide. Positions 17–34 (SESIEENREEFPVEESAR) are excised as a propeptide. Cystine bridges form between cysteine 35–cysteine 49, cysteine 42–cysteine 55, cysteine 46–cysteine 81, cysteine 48–cysteine 65, and cysteine 57–cysteine 63.

Belongs to the neurotoxin 03 (Tx2) family. 05 subfamily. As to expression, expressed by the venom gland.

The protein localises to the secreted. This insecticidal neurotoxin targets two types of channels/receptors. It reversibly inhibits the N-methyl-D-aspartate (NMDA)-subtype of ionotropic glutamate receptor (GRIN). It inhibits glutamate uptake from rat brain synaptosomes, and blocks GRIN in hippocampal slices. It also acts on sodium channels of both insects and mammals. On sodium channel insects, it strongly slows down channel inactivation (EC(50)=212.5 nM) and causes an increase (105%) in peak amplitude (at 1 uM) of B.germanica sodium channel (Nav), whereas it inhibits all mammalien sodium channels tested with the following order of potency: Nav1.3/SCN3A (IC(50)=1.5 uM) &gt; Nav1.6/SCN8A &gt; Nav1.5/SCN5A &gt; Nav1.4/SCN4A &gt;= Nav1.2/SCN2A. In vivo, it is highly toxic to house fly (Musca domestica), cockroach (Periplaneta americana), and cricket (Acheta domesticus). In different rat pain models (induced by PGE2, carrageenan or glutamate), it shows antinociceptive effect that may be related to an inhibitory activity on the glutamatergic system. This chain is GAMMA-ctenitoxin-Pn1a, found in Phoneutria nigriventer (Brazilian armed spider).